A 270-amino-acid polypeptide reads, in one-letter code: Pantoate kinase (270 aa).

The protein belongs to the GHMP kinase family. PoK subfamily.

The enzyme catalyses (R)-pantoate + ATP = (R)-4-phosphopantoate + ADP + H(+). It participates in cofactor biosynthesis; coenzyme A biosynthesis. In terms of biological role, phosphorylates (R)-pantoate to form (R)-4-phosphopantoate in the CoA biosynthesis pathway. In Methanocaldococcus jannaschii (strain ATCC 43067 / DSM 2661 / JAL-1 / JCM 10045 / NBRC 100440) (Methanococcus jannaschii), this protein is Pantoate kinase.